A 315-amino-acid polypeptide reads, in one-letter code: Small ribosomal subunit protein uS3 (315 aa).

A KH type-2 domain is found at 38–106 (IRKMMSRGME…QVQLNILEVK (69 aa)). Residues 211–315 (AEREAQEALQ…VANTPEKAEE (105 aa)) form a disordered region. Residues 222–232 (QTRRERPRRGP) are compositionally biased toward basic residues. Low complexity predominate over residues 265 to 315 (APAETPAGEAAATEPTAPVAEPATAAASAPAEAASAPAEAAVANTPEKAEE).

Belongs to the universal ribosomal protein uS3 family. Part of the 30S ribosomal subunit. Forms a tight complex with proteins S10 and S14.

Binds the lower part of the 30S subunit head. Binds mRNA in the 70S ribosome, positioning it for translation. This chain is Small ribosomal subunit protein uS3, found in Frankia casuarinae (strain DSM 45818 / CECT 9043 / HFP020203 / CcI3).